Reading from the N-terminus, the 209-residue chain is Urease accessory protein UreG (209 aa).

A GTP-binding site is contributed by 10 to 17 (GPVGSGKT).

It belongs to the SIMIBI class G3E GTPase family. UreG subfamily. In terms of assembly, homodimer. UreD, UreF and UreG form a complex that acts as a GTP-hydrolysis-dependent molecular chaperone, activating the urease apoprotein by helping to assemble the nickel containing metallocenter of UreC. The UreE protein probably delivers the nickel.

The protein resides in the cytoplasm. Facilitates the functional incorporation of the urease nickel metallocenter. This process requires GTP hydrolysis, probably effectuated by UreG. The protein is Urease accessory protein UreG of Lysinibacillus sphaericus (strain C3-41).